The following is a 211-amino-acid chain: Probable GTP-binding protein EngB (211 aa).

The EngB-type G domain maps to 21 to 197 (TAPEFAFLGR…WGEIHRVAAE (177 aa)). GTP-binding positions include 29 to 36 (GRSNVGKS), 55 to 59 (GRTRA), 80 to 83 (DLPG), 147 to 150 (TKAD), and 176 to 178 (CSA). Mg(2+) is bound by residues Ser-36 and Thr-57.

Belongs to the TRAFAC class TrmE-Era-EngA-EngB-Septin-like GTPase superfamily. EngB GTPase family. Mg(2+) serves as cofactor.

Necessary for normal cell division and for the maintenance of normal septation. The sequence is that of Probable GTP-binding protein EngB from Acidobacterium capsulatum (strain ATCC 51196 / DSM 11244 / BCRC 80197 / JCM 7670 / NBRC 15755 / NCIMB 13165 / 161).